A 146-amino-acid polypeptide reads, in one-letter code: Sordarin/hypoxysordarin biosynthesis cluster protein G (146 aa).

It functions in the pathway antibiotic biosynthesis. Part of the gene cluster that mediates the biosynthesis of sordarin and hypoxysordarin, glycoside antibiotics with a unique tetracyclic diterpene aglycone structure. First, the geranylgeranyl diphosphate synthase sdnC constructs GGDP from farnesyl diphosphate and isopentenyl diphosphate. The diterpene cyclase sdnA then catalyzes the cyclization of GGDP to afford cycloaraneosene. Cycloaraneosene is then hydroxylated four times by the putative cytochrome P450 monooxygenases sdnB, sdnE, sdnF and sdnH to give a hydroxylated cycloaraneosene derivative such as cycloaraneosene-8,9,13,19-tetraol. Although the order of the hydroxylations is unclear, at least C8, C9 and C13 of the cycloaraneosene skeleton are hydroxylated before the sordaricin formation. Dehydration of the 13-hydroxy group of the hydroxylated cycloaraneosene derivative might be catalyzed by an unassigned hypothetical protein such as sdnG and sdnP to construct the cyclopentadiene moiety. The FAD-dependent oxidoreductase sdnN is proposed to catalyze the oxidation at C9 of the hydroxylated cycloaraneosene derivative and also catalyze the Baeyer-Villiger oxidation to give the lactone intermediate. The presumed lactone intermediate would be hydrolyzed to give an acrolein moiety and a carboxylate moiety. Then, [4+2]cycloaddition would occur between the acrolein moiety and the cyclopentadiene moiety to give sordaricin. SdnN might also be involved in the [4+2]cycloaddition after the hypothesized oxidation to accommodate the oxidized product and prompt the [4+2]cycloaddition. GDP-6-deoxy-D-altrose may be biosynthesized from GDP-D-mannose by the putative GDP-mannose-4,6-dehydratase sdnI and the short-chain dehydrogenase sdnK. The glycosyltransferase sdnJ catalyzes the attachment of 6-deoxy-D-altrose onto the 19-hydroxy group of sordaricin to give 4'-O-demethylsordarin. The methyltransferase sdnD would complete the biosynthesis of sordarin. Sordarin can be further modified into hypoxysordarin. The unique acyl chain at the 3'-hydroxy group of hypoxysordarin would be constructed by an iterative type I PKS sdnO and the trans-acting polyketide methyltransferase sdnL. SdnL would be responsible for the introduction of an alpha-methyl group of the polyketide chain. Alternatively, the beta-lactamase-like protein sdnR might be responsible for the cleavage and transfer of the polyketide chain from the PKS sdnO to sordarin. Two putative cytochrome P450 monooxygenases, sdnQ and sdnT, might catalyze the epoxidations of the polyketide chain to complete the biosynthesis of hypoxysordarin. Transcriptional regulators sdnM and sdnS are presumably encoded for the transcriptional regulation of the expression of the sdn gene cluster. The protein is Sordarin/hypoxysordarin biosynthesis cluster protein G of Sordaria araneosa (Pleurage araneosa).